We begin with the raw amino-acid sequence, 321 residues long: Glycerol-3-phosphate dehydrogenase [NAD(P)+] (321 aa).

Trp-15, Arg-35, and Lys-101 together coordinate NADPH. Sn-glycerol 3-phosphate is bound by residues Lys-101 and Gly-129. Residue Ala-133 participates in NADPH binding. Residues Lys-184, Asp-237, Ser-247, Arg-248, and Asn-249 each contribute to the sn-glycerol 3-phosphate site. Residue Lys-184 is the Proton acceptor of the active site. Arg-248 lines the NADPH pocket. NADPH-binding residues include Val-268 and Glu-270.

The protein belongs to the NAD-dependent glycerol-3-phosphate dehydrogenase family.

It localises to the cytoplasm. The enzyme catalyses sn-glycerol 3-phosphate + NAD(+) = dihydroxyacetone phosphate + NADH + H(+). The catalysed reaction is sn-glycerol 3-phosphate + NADP(+) = dihydroxyacetone phosphate + NADPH + H(+). It participates in membrane lipid metabolism; glycerophospholipid metabolism. Catalyzes the reduction of the glycolytic intermediate dihydroxyacetone phosphate (DHAP) to sn-glycerol 3-phosphate (G3P), the key precursor for phospholipid synthesis. This Acidiphilium cryptum (strain JF-5) protein is Glycerol-3-phosphate dehydrogenase [NAD(P)+].